Here is a 273-residue protein sequence, read N- to C-terminus: Gap junction beta-5 protein (273 aa).

The Cytoplasmic segment spans residues 1–20 (MNWSIFEGLLSGVNKYSTAF). A helical membrane pass occupies residues 21-40 (GRIWLSLVFIFRVLVYLVTA). The Extracellular segment spans residues 41 to 75 (ERVWSDDHKDFDCNTRQPGCSNVCFDEFFPVSHVR). A helical membrane pass occupies residues 76-98 (LWALQLILVTCPSLLVVMHVAYR). The Cytoplasmic portion of the chain corresponds to 99–126 (EVQEKRHREAHGENSGRLYLNPGKKRGG). A helical transmembrane segment spans residues 127–149 (LWWTYVCSLVFKASVDIAFLYVF). The Extracellular segment spans residues 150–187 (HSFYPKYILPPVVKCHADPCPNIVDCFISKPSEKNIFT). Residues 188-210 (LFMVATAAICILLNLVELIYLVS) traverse the membrane as a helical segment. At 211-273 (KRCHECLAAR…PRDHVKKTIL (63 aa)) the chain is on the cytoplasmic side.

The protein belongs to the connexin family. Beta-type (group I) subfamily. As to quaternary structure, a connexon is composed of a hexamer of connexins.

It is found in the cell membrane. It localises to the cell junction. Its subcellular location is the gap junction. One gap junction consists of a cluster of closely packed pairs of transmembrane channels, the connexons, through which materials of low MW diffuse from one cell to a neighboring cell. The sequence is that of Gap junction beta-5 protein (GJB5) from Homo sapiens (Human).